The primary structure comprises 508 residues: GMP synthase [glutamine-hydrolyzing] (508 aa).

The 189-residue stretch at 1-189 (MILVLDFGSQ…ALLVCDCEKT (189 aa)) folds into the Glutamine amidotransferase type-1 domain. Cys78 serves as the catalytic Nucleophile. Residues His163 and Glu165 contribute to the active site. The region spanning 190-383 (WGMQHFAQRE…LGISQDFLMR (194 aa)) is the GMPS ATP-PPase domain. 217 to 223 (SGGVDST) is a binding site for ATP.

In terms of assembly, homodimer.

The enzyme catalyses XMP + L-glutamine + ATP + H2O = GMP + L-glutamate + AMP + diphosphate + 2 H(+). It functions in the pathway purine metabolism; GMP biosynthesis; GMP from XMP (L-Gln route): step 1/1. Functionally, catalyzes the synthesis of GMP from XMP. This Helicobacter pylori (strain HPAG1) protein is GMP synthase [glutamine-hydrolyzing].